The primary structure comprises 310 residues: Very-long-chain enoyl-CoA reductase (310 aa).

Residues 1–85 are Cytoplasmic-facing; that stretch reads MPITIKSRSK…KDLGPQISWR (85 aa). Residues 86-106 form a helical membrane-spanning segment; it reads LVFFCEYLGPVLVHSLFYYLS. Over 107–141 the chain is Lumenal; sequence TIPTVVDRWHSASSDYNPFLNRVAYFLILGHYGKR. A helical membrane pass occupies residues 142 to 162; the sequence is LFETLFVHQFSLATMPIFNLF. At 163 to 165 the chain is on the cytoplasmic side; it reads KNC. The helical transmembrane segment at 166 to 186 threads the bilayer; sequence FHYWVLSGLISFGYFGYGFPF. At 187–201 the chain is on the lumenal side; that stretch reads GNAKLFKYYSYLKLD. A helical transmembrane segment spans residues 202-222; it reads DLSTLIGLFVLSELWNFYCHI. The Cytoplasmic portion of the chain corresponds to 223–242; that stretch reads KLRLWGDYQKKHGNAKIRVP. The helical transmembrane segment at 243 to 265 threads the bilayer; it reads LNQGIFNLFVAPNYTFEVWSWIW. The Lumenal portion of the chain corresponds to 266 to 268; sequence FTF. A helical membrane pass occupies residues 269–291; it reads VFKFNLFAVLFLTVSTAQMYAWA. The Cytoplasmic segment spans residues 292-310; that stretch reads QKKNKKYHTRRAFLIPFVF.

This sequence belongs to the steroid 5-alpha reductase family. Interacts with the fatty acid elongation system components ELO2 and ELO3. Interacts with NVJ1.

The protein resides in the endoplasmic reticulum membrane. The enzyme catalyses a very-long-chain 2,3-saturated fatty acyl-CoA + NADP(+) = a very-long-chain (2E)-enoyl-CoA + NADPH + H(+). It carries out the reaction octadecanoyl-CoA + NADP(+) = (2E)-octadecenoyl-CoA + NADPH + H(+). The catalysed reaction is (2E)-eicosenoyl-CoA + NADPH + H(+) = eicosanoyl-CoA + NADP(+). It catalyses the reaction (2E)-docosenoyl-CoA + NADPH + H(+) = docosanoyl-CoA + NADP(+). The enzyme catalyses (2E)-tetracosenoyl-CoA + NADPH + H(+) = tetracosanoyl-CoA + NADP(+). It carries out the reaction (2E)-hexacosenoyl-CoA + NADPH + H(+) = hexacosanoyl-CoA + NADP(+). It participates in lipid metabolism; fatty acid biosynthesis. Catalyzes the last of the four reactions of the long-chain fatty acids elongation cycle. This endoplasmic reticulum-bound enzymatic process, allows the addition of 2 carbons to the chain of long- and very long-chain fatty acids/VLCFAs per cycle. This enzyme reduces the trans-2,3-enoyl-CoA fatty acid intermediate to an acyl-CoA that can be further elongated by entering a new cycle of elongation. Thereby, it participates in the production of VLCFAs of different chain lengths that are involved in multiple biological processes as precursors of membrane lipids and lipid mediators. VLCFAs serve for instance as precursors for ceramide and sphingolipids. Required for normal biogenesis of piecemeal microautophagy of the nucleus (PMN) bleps and vesicles during nutrient stress. The protein is Very-long-chain enoyl-CoA reductase (TSC13) of Saccharomyces cerevisiae (strain ATCC 204508 / S288c) (Baker's yeast).